Reading from the N-terminus, the 84-residue chain is Putative membrane protein insertion efficiency factor (84 aa).

The tract at residues 63–84 (WGGSGYDPVPGADPEHDRRPRG) is disordered. The span at 75 to 84 (DPEHDRRPRG) shows a compositional bias: basic and acidic residues.

The protein belongs to the UPF0161 family.

The protein resides in the cell inner membrane. Could be involved in insertion of integral membrane proteins into the membrane. The sequence is that of Putative membrane protein insertion efficiency factor from Cereibacter sphaeroides (strain ATCC 17029 / ATH 2.4.9) (Rhodobacter sphaeroides).